The primary structure comprises 258 residues: Development-specific 25 kDa protein (258 aa).

An NAD(+)-binding site is contributed by 10-34; the sequence is VYVGGFSGFGYQVCQMMMKKPMKHL. Ser-138 is a substrate binding site. Tyr-151 functions as the Proton acceptor in the catalytic mechanism.

Belongs to the short-chain dehydrogenases/reductases (SDR) family.

This is Development-specific 25 kDa protein from Sarcophaga peregrina (Flesh fly).